Here is a 164-residue protein sequence, read N- to C-terminus: Large ribosomal subunit protein eL24 (164 aa).

Disordered regions lie at residues 63-82 (KDAA…KPYS) and 117-164 (ERIK…GGKA). Residues 71–81 (KKRRRATKKPY) are compositionally biased toward basic residues. Positions 117–133 (ERIKKTKDEKKAKKAEV) are enriched in basic and acidic residues.

This sequence belongs to the eukaryotic ribosomal protein eL24 family.

It is found in the cytoplasm. In Cicer arietinum (Chickpea), this protein is Large ribosomal subunit protein eL24 (RPL24).